A 1746-amino-acid chain; its full sequence is Non-reducing polyketide synthase ptaA (1746 aa).

Residues 4-227 (NSGSGTSPWG…ALPVYGGLCH (224 aa)) form an N-terminal acylcarrier protein transacylase domain (SAT) region. The Ketosynthase family 3 (KS3) domain maps to 361-796 (QSKIAIVGMS…GGNTTIAIEE (436 aa)). Catalysis depends on for beta-ketoacyl synthase activity residues Cys-534, His-670, and His-714. The tract at residues 898 to 1218 (FAFTGQGASY…LGALHLAGIP (321 aa)) is malonyl-CoA:ACP transacylase (MAT) domain. The product template (PT) domain stretch occupies residues 1286-1605 (TSTVHRVIGE…RLLLDRFFSA (320 aa)). Residues 1290–1425 (HRVIGETFDG…ATLFYGKAND (136 aa)) form an N-terminal hotdog fold region. The 311-residue stretch at 1290 to 1600 (HRVIGETFDG…FRRYPRLLLD (311 aa)) folds into the PKS/mFAS DH domain. His-1322 acts as the Proton acceptor; for dehydratase activity in catalysis. Residues 1452-1600 (VANRFSRNMA…FRRYPRLLLD (149 aa)) form a C-terminal hotdog fold region. The active-site Proton donor; for dehydratase activity is the Asp-1511. The Carrier domain maps to 1671 to 1745 (DSITVKAMAL…DLRAWLLEYY (75 aa)). Ser-1705 bears the O-(pantetheine 4'-phosphoryl)serine mark.

It catalyses the reaction holo-[ACP] + 8 malonyl-CoA + 8 H(+) = atrochrysone carboxyl-[ACP] + 8 CO2 + 8 CoA + 2 H2O. Its pathway is secondary metabolite biosynthesis. In terms of biological role, non-reducing polyketide synthase; part of the gene cluster that mediates the biosynthesis of pestheic acid, a diphenyl ether which is a biosynthetic precursor of the unique chloropupukeananes. The biosynthesis initiates from condensation of acetate and malonate units catalyzed by the non-reducing PKS ptaA. As the ptaA protein is TE/CLC domain-deficient, hydrolysis and Claisen cyclization of the polyketide could be catalyzed by ptaB containing a beta-lactamase domain. The ptaB protein might hydrolyze the thioester bond between the ACP of ptaA and the intermediate to release atrochrysone carboxylic acid, which is spontaneously dehydrated to form endocrocin anthrone. Endocrocin anthrone is then converted to endocrocin, catalyzed by the anthrone oxygenase ptaC. Spontaneous decarboxylation of endocrocin occurs to generate emodin. An O-methyltransferase (ptaH or ptaI) could methylate emodin to form physcion. PtaJ could then catalyze the oxidative cleavage of physcion, and rotation of the intermediate could then afford desmethylisosulochrin. PtaF, a putative NADH-dependent oxidoreductase, might also participate in the oxidative cleavage step. Desmethylisosulochrin is then transformed by another O-methyltransferase (ptaH or ptaI) to form isosulochrin. Chlorination of isosulochrin by ptaM in the cyclohexadienone B ring then produces chloroisosulochrin. PtaE is responsible for the oxidative coupling reactions of both benzophenones isosulochrin and chloroisosulochrin to RES-1214-1 and pestheic acid respectively, regardless of chlorination. This Pestalotiopsis fici (strain W106-1 / CGMCC3.15140) protein is Non-reducing polyketide synthase ptaA.